We begin with the raw amino-acid sequence, 156 residues long: Transcription factor MafF (156 aa).

Residues Arg-51 to Lys-76 form a basic motif region. Residues Arg-51 to Leu-114 enclose the bZIP domain. The segment at Leu-79–Leu-93 is leucine-zipper.

The protein belongs to the bZIP family. Maf subfamily. Monomer and homo- or heterodimer. Interacts with MIP. Forms high affinity heterodimers with members of the CNC-bZIP family such as NFE2L1/NRF1. As to expression, highly expressed in the lung, lower expression in the brain, thymus, liver, spleen, intestine, kidney, heart, muscle, and ovary. Not significantly expressed in hematopoietic cells.

The protein resides in the nucleus. Since they lack a putative transactivation domain, the small Mafs behave as transcriptional repressors when they dimerize among themselves. However, they seem to serve as transcriptional activators by dimerizing with other (usually larger) basic-zipper proteins, such as NFE2L1/NRF1, and recruiting them to specific DNA-binding sites. Interacts with the upstream promoter region of the oxytocin receptor gene. May be a transcriptional enhancer in the up-regulation of the oxytocin receptor gene at parturition. In Mus musculus (Mouse), this protein is Transcription factor MafF (Maff).